Here is a 716-residue protein sequence, read N- to C-terminus: MAPSLDSISHSFANGVASAKQAVNGASTNLAVAGSHLPTTQVTQVDIVEKMLAAPTDSTLELDGYSLNLGDVVSAARKGRPVRVKDSDEIRSKIDKSVEFLRSQLSMSVYGVTTGFGGSADTRTEDAISLQKALLEHQLCGVLPSSFDSFRLGRGLENSLPLEVVRGAMTIRVNSLTRGHSAVRLVVLEALTNFLNHGITPIVPLRGTISASGDLSPLSYIAAAISGHPDSKVHVVHEGKEKILYAREAMALFNLEPVVLGPKEGLGLVNGTAVSASMATLALHDAHMLSLLSQSLTAMTVEAMVGHAGSFHPFLHDVTRPHPTQIEVAGNIRKLLEGSRFAVHHEEEVKVKDDEGILRQDRYPLRTSPQWLGPLVSDLIHAHAVLTIEAGQSTTDNPLIDVENKTSHHGGNFQAAAVANTMEKTRLGLAQIGKLNFTQLTEMLNAGMNRGLPSCLAAEDPSLSYHCKGLDIAAAAYTSELGHLANPVTTHVQPAEMANQAVNSLALISARRTTESNDVLSLLLATHLYCVLQAIDLRAIEFEFKKQFGPAIVSLIDQHFGSAMTGSNLRDELVEKVNKTLAKRLEQTNSYDLVPRWHDAFSFAAGTVVEVLSSTSLSLAAVNAWKVAAAESAISLTRQVRETFWSAASTSSPALSYLSPRTQILYAFVREELGVKARRGDVFLGKQEVTIGSNVSKIYEAIKSGRINNVLLKMLA.

Tyrosine 110 serves as the catalytic Proton donor/acceptor. Positions alanine 211–glycine 213 form a cross-link, 5-imidazolinone (Ala-Gly). Serine 212 bears the 2,3-didehydroalanine (Ser) mark. (E)-cinnamate-binding residues include asparagine 270, glutamine 360, arginine 366, asparagine 397, lysine 468, glutamate 496, and asparagine 499.

The protein belongs to the PAL/histidase family. Homotetramer. Dimer of dimers. Contains an active site 4-methylidene-imidazol-5-one (MIO), which is formed autocatalytically by cyclization and dehydration of residues Ala-Ser-Gly.

The protein resides in the cytoplasm. The catalysed reaction is L-phenylalanine = (E)-cinnamate + NH4(+). It carries out the reaction L-tyrosine = (E)-4-coumarate + NH4(+). The protein operates within phenylpropanoid metabolism; trans-cinnamate biosynthesis; trans-cinnamate from L-phenylalanine: step 1/1. Its function is as follows. Catalyzes the non-oxidative deamination of L-phenylalanine and L-tyrosine to form trans-cinnamic acid and p-coumaric acid respectively with similar efficiencies. Facilitates the commitment step in phenylpropanoid pathways that produce secondary metabolites such as lignins, coumarins and flavonoids. The chain is Phenylalanine/tyrosine ammonia-lyase (PAL) from Rhodotorula toruloides (Yeast).